A 147-amino-acid chain; its full sequence is uncharacterized protein (147 aa).

The Rhodanese domain maps to 50–140; that stretch reads NQKKAIIVDT…WNSENLPTTF (91 aa).

This is an uncharacterized protein from Buchnera aphidicola subsp. Schizaphis graminum (strain Sg).